A 720-amino-acid polypeptide reads, in one-letter code: Glutaryl-7-aminocephalosporanic-acid acylase (720 aa).

Residues 1–29 (MLRVLHRAASALVMATVIGLAPAVAFALA) form the signal peptide. Residues 190–198 (DPPDLADQG) constitute a propeptide, spacer peptide. Ser-199 acts as the Nucleophile in catalysis. Active-site residues include His-221 and Glu-653.

Belongs to the peptidase S45 family. As to quaternary structure, heterotetramer of two alpha and two beta subunits processed from the same precursor.

Its subcellular location is the periplasm. It catalyses the reaction (7R)-7-(4-carboxybutanamido)cephalosporanate + H2O = (7R)-7-aminocephalosporanate + glutarate. Functionally, catalyzes the deacylation of 7 beta-(4-carboxybutanamido)cephalosporanic acid (glutaryl-7-aminocephalosporanic acid or GL-7-ACA) to 7-aminocephalosporanic acid (7-ACA). In Pseudomonas sp. (strain SY-77), this protein is Glutaryl-7-aminocephalosporanic-acid acylase.